We begin with the raw amino-acid sequence, 170 residues long: Tubulin polymerization-promoting protein family member 2 (170 aa).

The interval 127–170 (TGTHKERFDESGKGKGIAGREEMTDNTGYVSGYKGSGTYDKKTK) is disordered. Positions 129–149 (THKERFDESGKGKGIAGREEM) are enriched in basic and acidic residues.

The protein belongs to the TPPP family. Expressed in spermatids. Detected in liver cancer (at protein level).

It localises to the cytoplasm. Its subcellular location is the cytosol. The protein resides in the cell projection. The protein localises to the cilium. It is found in the flagellum. Functionally, probable regulator of microtubule dynamics required for sperm motility. In contrast to other members of the family, has no microtubule bundling activity. This Homo sapiens (Human) protein is Tubulin polymerization-promoting protein family member 2.